Reading from the N-terminus, the 414-residue chain is Succinylornithine transaminase (414 aa).

N6-(pyridoxal phosphate)lysine is present on lysine 260.

This sequence belongs to the class-III pyridoxal-phosphate-dependent aminotransferase family. AstC subfamily. Requires pyridoxal 5'-phosphate as cofactor.

The enzyme catalyses N(2)-succinyl-L-ornithine + 2-oxoglutarate = N-succinyl-L-glutamate 5-semialdehyde + L-glutamate. The protein operates within amino-acid degradation; L-arginine degradation via AST pathway; L-glutamate and succinate from L-arginine: step 3/5. In terms of biological role, catalyzes the transamination of N(2)-succinylornithine and alpha-ketoglutarate into N(2)-succinylglutamate semialdehyde and glutamate. Can also act as an acetylornithine aminotransferase. This chain is Succinylornithine transaminase, found in Yersinia pestis bv. Antiqua (strain Antiqua).